The primary structure comprises 875 residues: F-box only protein 41 (875 aa).

Disordered stretches follow at residues 85 to 110 (ESTS…HHHH), 165 to 194 (SSAC…PSPA), and 347 to 542 (SSSC…PSRS). Pro residues predominate over residues 170–182 (TPPPGPGPGPCPG). The span at 183-194 (PASASPASPSPA) shows a compositional bias: low complexity. Positions 209–351 (ALEKLEVDRR…QLQVISSSCG (143 aa)) form a coiled coil. Residues 347–356 (SSSCGSTPSA) show a composition bias toward polar residues. A compositionally biased stretch (gly residues) spans 359–368 (GRGGGGGGAG). Arg360 is modified (omega-N-methylarginine). Polar residues predominate over residues 395-416 (HGSSPSTGASSRVPAASQSSGC). Ser478 carries the post-translational modification Phosphoserine. Thr479 bears the Phosphothreonine mark. Positions 496–540 (SEAEGPLDAPRPGPAMAGPLSSCRLSARPEGGSGRGRRAERVSPS) constitute an F-box domain. Residue Ser762 is modified to Phosphoserine.

As to quaternary structure, directly interacts with SKP1 and CUL1.

In terms of biological role, substrate-recognition component of the SCF (SKP1-CUL1-F-box protein)-type E3 ubiquitin ligase complex. This Homo sapiens (Human) protein is F-box only protein 41 (FBXO41).